A 701-amino-acid polypeptide reads, in one-letter code: DNA ligase (701 aa).

The tract at residues 1 to 21 (MSAKSTPDAGPQEQATEAEAE) is disordered. Residues 50–54 (DADFD), 100–101 (SL), and Glu130 contribute to the NAD(+) site. Lys132 (N6-AMP-lysine intermediate) is an active-site residue. The NAD(+) site is built by Arg153, Glu193, Lys309, and Lys333. Residues Cys427, Cys430, Cys446, and Cys452 each contribute to the Zn(2+) site. The region spanning 616 to 701 (SIARTLEGLS…LENGPQAPEG (86 aa)) is the BRCT domain.

This sequence belongs to the NAD-dependent DNA ligase family. LigA subfamily. Requires Mg(2+) as cofactor. Mn(2+) serves as cofactor.

It carries out the reaction NAD(+) + (deoxyribonucleotide)n-3'-hydroxyl + 5'-phospho-(deoxyribonucleotide)m = (deoxyribonucleotide)n+m + AMP + beta-nicotinamide D-nucleotide.. Its function is as follows. DNA ligase that catalyzes the formation of phosphodiester linkages between 5'-phosphoryl and 3'-hydroxyl groups in double-stranded DNA using NAD as a coenzyme and as the energy source for the reaction. It is essential for DNA replication and repair of damaged DNA. The sequence is that of DNA ligase from Mycobacterium sp. (strain KMS).